Reading from the N-terminus, the 175-residue chain is NADH-quinone oxidoreductase subunit I (175 aa).

2 consecutive 4Fe-4S ferredoxin-type domains span residues 64–93 (KRDE…IIAD) and 110–139 (SLYE…LTEE). Residues cysteine 73, cysteine 76, cysteine 79, cysteine 83, cysteine 119, cysteine 122, cysteine 125, and cysteine 129 each contribute to the [4Fe-4S] cluster site.

Belongs to the complex I 23 kDa subunit family. In terms of assembly, NDH-1 is composed of 14 different subunits. Subunits NuoA, H, J, K, L, M, N constitute the membrane sector of the complex. Requires [4Fe-4S] cluster as cofactor.

The protein resides in the cell inner membrane. It carries out the reaction a quinone + NADH + 5 H(+)(in) = a quinol + NAD(+) + 4 H(+)(out). Its function is as follows. NDH-1 shuttles electrons from NADH, via FMN and iron-sulfur (Fe-S) centers, to quinones in the respiratory chain. The immediate electron acceptor for the enzyme in this species is believed to be ubiquinone. Couples the redox reaction to proton translocation (for every two electrons transferred, four hydrogen ions are translocated across the cytoplasmic membrane), and thus conserves the redox energy in a proton gradient. In Cytophaga hutchinsonii (strain ATCC 33406 / DSM 1761 / CIP 103989 / NBRC 15051 / NCIMB 9469 / D465), this protein is NADH-quinone oxidoreductase subunit I.